The chain runs to 430 residues: Adenylosuccinate synthetase (430 aa).

GTP is bound by residues Gly-13–Lys-19 and Gly-41–Thr-43. Catalysis depends on Asp-14, which acts as the Proton acceptor. Mg(2+) contacts are provided by Asp-14 and Gly-41. Residues Asp-14–Lys-17, Asn-39–His-42, Thr-130, Arg-144, Gln-225, Thr-240, and Arg-304 contribute to the IMP site. The active-site Proton donor is His-42. Ser-300–Arg-306 is a binding site for substrate. GTP contacts are provided by residues Arg-306, Lys-332–Asp-334, and Ser-414–Gly-416.

The protein belongs to the adenylosuccinate synthetase family. In terms of assembly, homodimer. It depends on Mg(2+) as a cofactor.

It localises to the cytoplasm. It carries out the reaction IMP + L-aspartate + GTP = N(6)-(1,2-dicarboxyethyl)-AMP + GDP + phosphate + 2 H(+). It functions in the pathway purine metabolism; AMP biosynthesis via de novo pathway; AMP from IMP: step 1/2. Plays an important role in the de novo pathway of purine nucleotide biosynthesis. Catalyzes the first committed step in the biosynthesis of AMP from IMP. The polypeptide is Adenylosuccinate synthetase (Pseudomonas putida (strain W619)).